Consider the following 457-residue polypeptide: Siroheme synthase 2 (457 aa).

Residues 1-204 (MDHLPIFCQL…DDEQAVTRIT (204 aa)) are precorrin-2 dehydrogenase /sirohydrochlorin ferrochelatase. NAD(+) is bound by residues 22–23 (DV) and 43–44 (LA). Position 128 is a phosphoserine (Ser128). The tract at residues 216–457 (GEVVLVGAGP…RDKLNWFSSK (242 aa)) is uroporphyrinogen-III C-methyltransferase. An S-adenosyl-L-methionine-binding site is contributed by Pro225. Residue Asp248 is the Proton acceptor of the active site. Lys270 functions as the Proton donor in the catalytic mechanism. Residues 301-303 (GGD), Ile306, 331-332 (TA), Met382, and Gly411 contribute to the S-adenosyl-L-methionine site.

In the N-terminal section; belongs to the precorrin-2 dehydrogenase / sirohydrochlorin ferrochelatase family. The protein in the C-terminal section; belongs to the precorrin methyltransferase family.

It carries out the reaction uroporphyrinogen III + 2 S-adenosyl-L-methionine = precorrin-2 + 2 S-adenosyl-L-homocysteine + H(+). It catalyses the reaction precorrin-2 + NAD(+) = sirohydrochlorin + NADH + 2 H(+). The catalysed reaction is siroheme + 2 H(+) = sirohydrochlorin + Fe(2+). It functions in the pathway cofactor biosynthesis; adenosylcobalamin biosynthesis; precorrin-2 from uroporphyrinogen III: step 1/1. The protein operates within cofactor biosynthesis; adenosylcobalamin biosynthesis; sirohydrochlorin from precorrin-2: step 1/1. It participates in porphyrin-containing compound metabolism; siroheme biosynthesis; precorrin-2 from uroporphyrinogen III: step 1/1. Its pathway is porphyrin-containing compound metabolism; siroheme biosynthesis; siroheme from sirohydrochlorin: step 1/1. It functions in the pathway porphyrin-containing compound metabolism; siroheme biosynthesis; sirohydrochlorin from precorrin-2: step 1/1. Multifunctional enzyme that catalyzes the SAM-dependent methylations of uroporphyrinogen III at position C-2 and C-7 to form precorrin-2 via precorrin-1. Then it catalyzes the NAD-dependent ring dehydrogenation of precorrin-2 to yield sirohydrochlorin. Finally, it catalyzes the ferrochelation of sirohydrochlorin to yield siroheme. The sequence is that of Siroheme synthase 2 from Cronobacter sakazakii (strain ATCC BAA-894) (Enterobacter sakazakii).